Consider the following 248-residue polypeptide: Deoxyribose-phosphate aldolase (248 aa).

Asp106 (proton donor/acceptor) is an active-site residue. Catalysis depends on Lys168, which acts as the Schiff-base intermediate with acetaldehyde. Catalysis depends on Lys197, which acts as the Proton donor/acceptor.

Belongs to the DeoC/FbaB aldolase family. DeoC type 1 subfamily.

Its subcellular location is the cytoplasm. The catalysed reaction is 2-deoxy-D-ribose 5-phosphate = D-glyceraldehyde 3-phosphate + acetaldehyde. The protein operates within carbohydrate degradation; 2-deoxy-D-ribose 1-phosphate degradation; D-glyceraldehyde 3-phosphate and acetaldehyde from 2-deoxy-alpha-D-ribose 1-phosphate: step 2/2. Catalyzes a reversible aldol reaction between acetaldehyde and D-glyceraldehyde 3-phosphate to generate 2-deoxy-D-ribose 5-phosphate. This is Deoxyribose-phosphate aldolase from Rhizobium meliloti (strain 1021) (Ensifer meliloti).